A 499-amino-acid polypeptide reads, in one-letter code: Centrosomal protein of 57 kDa (499 aa).

Residues 1–16 (MAAASVSAASDSQFSS) are compositionally biased toward low complexity. The segment at 1–41 (MAAASVSAASDSQFSSVLAEPSRSNGNMVHHSSSPYVLYPP) is disordered. A compositionally biased stretch (polar residues) spans 22 to 35 (SRSNGNMVHHSSSP). Phosphoserine is present on Ser53. Positions 58-239 (TFAYPESNSR…RAAELQSGIE (182 aa)) are centrosome localization domain (CLD). A coiled-coil region spans residues 63 to 242 (ESNSRAIFSA…ELQSGIEANR (180 aa)). Disordered regions lie at residues 255–275 (TSTR…GFRN) and 424–476 (LEKQ…SRKN). Positions 278–490 (GAQPHYRLCL…KDMQTLQNSL (213 aa)) are mediates interaction with microtubules. Positions 388-491 (PSEELKDNLE…DMQTLQNSLQ (104 aa)) form a coiled coil. The segment covering 427-443 (QSTDKQKELKGNKKTLD) has biased composition (basic and acidic residues). Residues 448-458 (SSSRSSVITRT) are compositionally biased toward low complexity. The span at 460 to 474 (SKKDFTKQRPGEKSR) shows a compositional bias: basic and acidic residues.

It belongs to the translokin family. Homodimer and homooligomer. Interacts with FGF2 and RAP80. Does not interact with FGF1 or FGF2 isoform 24 kDa. Interacts with microtubules. In terms of tissue distribution, ubiquitous (at protein level).

It is found in the nucleus. It localises to the cytoplasm. The protein resides in the cytoskeleton. The protein localises to the microtubule organizing center. Its subcellular location is the centrosome. Centrosomal protein which may be required for microtubule attachment to centrosomes. May act by forming ring-like structures around microtubules. Mediates nuclear translocation and mitogenic activity of the internalized growth factor FGF2. This is Centrosomal protein of 57 kDa (Cep57) from Rattus norvegicus (Rat).